The sequence spans 320 residues: Aristolochene synthase (320 aa).

The span at 1–14 (MKKPNGTNGASSSL) shows a compositional bias: polar residues. The segment at 1–20 (MKKPNGTNGASSSLEPPPST) is disordered. Residues Asp90, Asn219, Ser223, and Glu227 each contribute to the Mg(2+) site. Residues Arg314 and Tyr315 each contribute to the (2E,6E)-farnesyl diphosphate site.

The protein belongs to the terpene synthase family. Homodimer. Mg(2+) serves as cofactor.

The catalysed reaction is (2E,6E)-farnesyl diphosphate = (+)-aristolochene + diphosphate. Its pathway is sesquiterpene biosynthesis; aristolochene biosynthesis; aristolochene from farnesyl diphosphate: step 1/1. In terms of biological role, catalyzes the cyclization of trans,trans-farnesyl diphosphate (FPP) to the bicyclic sesquiterpene aristolochene. Produces germacrene A as an enzyme-bound intermediate that is not released by the enzyme, but is further cyclized to produce aristolochene. Aristolochene is the likely parent compound for a number of sesquiterpenoid toxins produced by filamentous fungi. This Aspergillus terreus protein is Aristolochene synthase (Ari1).